A 604-amino-acid polypeptide reads, in one-letter code: Netrin-1 (604 aa).

The N-terminal stretch at 1 to 24 (MMRAVWEALAALAAVACLVGAVRG) is a signal peptide. The 238-residue stretch at 47–284 (HPRRCIPDFV…AVSDLQVGGR (238 aa)) folds into the Laminin N-terminal domain. N-linked (GlcNAc...) asparagine glycosylation is found at asparagine 95, asparagine 116, and asparagine 131. Intrachain disulfides connect cysteine 119/cysteine 152, cysteine 285/cysteine 294, cysteine 287/cysteine 304, cysteine 306/cysteine 315, cysteine 318/cysteine 338, cysteine 341/cysteine 350, cysteine 343/cysteine 368, cysteine 371/cysteine 380, cysteine 383/cysteine 401, cysteine 404/cysteine 416, cysteine 406/cysteine 423, cysteine 425/cysteine 434, cysteine 437/cysteine 451, cysteine 472/cysteine 544, and cysteine 491/cysteine 601. Laminin EGF-like domains are found at residues 285–340 (CKCN…ECVA), 341–403 (CNCN…ACKA), and 404–453 (CDCH…PCIK). An N-linked (GlcNAc...) asparagine glycan is attached at asparagine 417. Positions 472 to 601 (CDSYCKASKG…FQQREKKGKC (130 aa)) constitute an NTR domain. The short motif at 530-532 (RGD) is the Cell attachment site element.

In terms of assembly, binds to its receptors; DCC, UNC5A, UNC5B, UNC5C and probably UNC5D. Binds to its receptor; DSCAM. Interacts with APP. In the embryo, widely expressed in the developing nervous system and in mesodermal tissues.

The protein resides in the secreted. Its subcellular location is the cytoplasm. Netrins control guidance of CNS commissural axons and peripheral motor axons. Its association with either DCC or some UNC5 receptors will lead to axon attraction or repulsion, respectively. Binding to UNC5C might cause dissociation of UNC5C from polymerized TUBB3 in microtubules and thereby lead to increased microtubule dynamics and axon repulsion. Involved in dorsal root ganglion axon projection towards the spinal cord. It also serves as a survival factor via its association with its receptors which prevent the initiation of apoptosis. Involved in colorectal tumorigenesis by regulating apoptosis. The chain is Netrin-1 (Ntn1) from Mus musculus (Mouse).